Reading from the N-terminus, the 614-residue chain is Phragmoplastin DRP1C (614 aa).

One can recognise a Dynamin-type G domain in the interval 32 to 301; that stretch reads WEALPTVAVV…LETVIRQKIP (270 aa). The interval 42-49 is G1 motif; that stretch reads GGQSSGKS. 45 to 50 is a binding site for GTP; sequence SSGKSS. The G2 motif stretch occupies residues 68–70; the sequence is VTR. The segment at 143–146 is G3 motif; the sequence is DLPG. The tract at residues 212 to 215 is G4 motif; sequence TKLD. GTP-binding positions include 213–218 and 243–246; these read KLDIMD and NRSQ. The segment at 242-245 is G5 motif; sequence VNRS. A disordered region spans residues 499 to 519; that stretch reads EPEKEKPNPRNAPAPNADPYS. Positions 507-517 are enriched in low complexity; the sequence is PRNAPAPNADP. A GED domain is found at 523–614; sequence FRKIGSNVSA…RDDIDAVAWK (92 aa).

It belongs to the TRAFAC class dynamin-like GTPase superfamily. Dynamin/Fzo/YdjA family. As to quaternary structure, forms homodimer and may homooligomerize and heterooligomerize to form the phragmoplastin complex. Binds to PHIP1. As to expression, ubiquitous.

The protein resides in the cytoplasm. The protein localises to the cytoskeleton. Its subcellular location is the cell cortex. It localises to the cytoplasmic vesicle. It is found in the clathrin-coated vesicle. The protein resides in the phragmoplast. It carries out the reaction GTP + H2O = GDP + phosphate + H(+). Its function is as follows. Microtubule-associated force-producing protein that is targeted to the growing edges of the cell plate during cytokinesis. Also plays a major role in plasma membrane maintenance during pollen maturation. Has a GTPase activity. This Arabidopsis thaliana (Mouse-ear cress) protein is Phragmoplastin DRP1C.